The following is a 280-amino-acid chain: Pantothenate synthetase (280 aa).

30-37 (MGYLHEGH) contributes to the ATP binding site. The active-site Proton donor is H37. Q61 contacts (R)-pantoate. Q61 provides a ligand contact to beta-alanine. Residue 147–150 (GQKD) coordinates ATP. (R)-pantoate is bound at residue Q153. ATP-binding positions include V176 and 184–187 (MSSR).

The protein belongs to the pantothenate synthetase family. In terms of assembly, homodimer.

The protein resides in the cytoplasm. It catalyses the reaction (R)-pantoate + beta-alanine + ATP = (R)-pantothenate + AMP + diphosphate + H(+). Its pathway is cofactor biosynthesis; (R)-pantothenate biosynthesis; (R)-pantothenate from (R)-pantoate and beta-alanine: step 1/1. Its function is as follows. Catalyzes the condensation of pantoate with beta-alanine in an ATP-dependent reaction via a pantoyl-adenylate intermediate. This chain is Pantothenate synthetase, found in Thermotoga petrophila (strain ATCC BAA-488 / DSM 13995 / JCM 10881 / RKU-1).